Reading from the N-terminus, the 179-residue chain is Large ribosomal subunit protein uL5 (179 aa).

This sequence belongs to the universal ribosomal protein uL5 family. In terms of assembly, part of the 50S ribosomal subunit; part of the 5S rRNA/L5/L18/L25 subcomplex. Contacts the 5S rRNA and the P site tRNA. Forms a bridge to the 30S subunit in the 70S ribosome.

This is one of the proteins that bind and probably mediate the attachment of the 5S RNA into the large ribosomal subunit, where it forms part of the central protuberance. In the 70S ribosome it contacts protein S13 of the 30S subunit (bridge B1b), connecting the 2 subunits; this bridge is implicated in subunit movement. Contacts the P site tRNA; the 5S rRNA and some of its associated proteins might help stabilize positioning of ribosome-bound tRNAs. The chain is Large ribosomal subunit protein uL5 from Pseudomonas entomophila (strain L48).